A 550-amino-acid polypeptide reads, in one-letter code: MTPADLSQLIKQTAIDVLSARELDTTVLPETVVVERPRNPEHGDYATNVALQIAKKVGMNPRELGQVLADSLAANTAIDEASIAGPGFINIRLAAAAQGEIVAKILEAGATFGHSDLYQGRRVNLEFVSANPTGPIHLGGTRWAAVGDSLGRVLEASGAQVTREYYFNDHGRQIDRFTNSLVASAKGEPTPEDGYGGDYIKEIADAVVAQHPDVLALAEADLNERFRATGVEMMFAHIKESLHEFGTDFDVYFHENSLFESGAVDKAIQTLKDNGNLYFNEGAWWLKSSEYGDDKDRVVIKSDGDAAYIAGDIAYVADKFDRGHDLCIYMLGADHHGYISRLRAAAAAMGYEPSNVEVLIGQMVNLVRDGKAVRMSKRAGTVITLDDLVEAIGIDGARYSMIRSSVDSSLDIDLQLWEQQSSDNPVYYVQYGHARLCSIARKAADLGITAIDPDLSLLTHDREGDLIRTLGEFPAVVKAAAELREPHRIARFAEDLAGTFHRFYDSCQILPKVGESAEPIHTARLALANATRQVLANALRLVGVSAPERM.

A 'HIGH' region motif is present at residues 130-140 (ANPTGPIHLGG).

Belongs to the class-I aminoacyl-tRNA synthetase family. In terms of assembly, monomer.

The protein localises to the cytoplasm. It carries out the reaction tRNA(Arg) + L-arginine + ATP = L-arginyl-tRNA(Arg) + AMP + diphosphate. The protein is Arginine--tRNA ligase of Corynebacterium diphtheriae (strain ATCC 700971 / NCTC 13129 / Biotype gravis).